A 751-amino-acid polypeptide reads, in one-letter code: Photosystem I P700 chlorophyll a apoprotein A1 (751 aa).

The next 8 helical transmembrane spans lie at 71–94 (VFSAHFGQLAIIFTWLSGMYFHGA), 157–180 (LYCTAIGALIFAALMLFAGWFHYH), 196–220 (LNHHLAGLLGLGSLSWAGHQIHVSL), 292–310 (TAHHHLAIAVLFLIAGHMY), 347–370 (WHAQLALNLAMLGSLTIIVAHHMY), 386–412 (LSLFTHHMWIGGFIIVGAAAHAAIFLV), 434–456 (AIISHLNWVCIFLGFHSFGLYIH), and 532–550 (FLVHHIHAFTIHVTVLILL). [4Fe-4S] cluster-binding residues include C574 and C583. 2 consecutive transmembrane segments (helical) span residues 590-611 (HVFLGLFWMYNAISVVIFHFSW) and 665-687 (LSAYGLFFLGAHFVWAFSLMFLF). Position 676 (H676) interacts with chlorophyll a'. Chlorophyll a contacts are provided by M684 and Y692. Residue W693 participates in phylloquinone binding. The helical transmembrane segment at 725 to 745 (AVGVAHYLLGGIVTTWAFFLA) threads the bilayer.

It belongs to the PsaA/PsaB family. As to quaternary structure, the PsaA/B heterodimer binds the P700 chlorophyll special pair and subsequent electron acceptors. PSI consists of a core antenna complex that captures photons, and an electron transfer chain that converts photonic excitation into a charge separation. The eukaryotic PSI reaction center is composed of at least 11 subunits. It depends on P700 is a chlorophyll a/chlorophyll a' dimer, A0 is one or more chlorophyll a, A1 is one or both phylloquinones and FX is a shared 4Fe-4S iron-sulfur center. as a cofactor.

Its subcellular location is the plastid. It localises to the chloroplast thylakoid membrane. The enzyme catalyses reduced [plastocyanin] + hnu + oxidized [2Fe-2S]-[ferredoxin] = oxidized [plastocyanin] + reduced [2Fe-2S]-[ferredoxin]. Functionally, psaA and PsaB bind P700, the primary electron donor of photosystem I (PSI), as well as the electron acceptors A0, A1 and FX. PSI is a plastocyanin-ferredoxin oxidoreductase, converting photonic excitation into a charge separation, which transfers an electron from the donor P700 chlorophyll pair to the spectroscopically characterized acceptors A0, A1, FX, FA and FB in turn. Oxidized P700 is reduced on the lumenal side of the thylakoid membrane by plastocyanin. The polypeptide is Photosystem I P700 chlorophyll a apoprotein A1 (Welwitschia mirabilis (Tree tumbo)).